Consider the following 483-residue polypeptide: Glutamate mutase epsilon subunit (483 aa).

Position 66 (Arg-66) interacts with L-glutamate. Gly-68 is a binding site for adenosylcob(III)alamin. An L-glutamate-binding site is contributed by Arg-100. Asn-123 is an adenosylcob(III)alamin binding site. L-glutamate is bound by residues Arg-149–His-150, Glu-171, and Tyr-177. Pro-180 is a binding site for adenosylcob(III)alamin. Tyr-181 is a binding site for L-glutamate. Adenosylcob(III)alamin-binding residues include Phe-297, Lys-326, Glu-330, and Ile-334.

It belongs to the methylaspartate mutase GlmE subunit family. Heterotetramer composed of 2 epsilon subunits (GlmE) and 2 sigma subunits (GlmS). GlmE exists as a homodimer and GlmS as a monomer. Adenosylcob(III)alamin serves as cofactor.

It carries out the reaction (2S,3S)-3-methyl-L-aspartate = L-glutamate. The protein operates within amino-acid degradation; L-glutamate degradation via mesaconate pathway; acetate and pyruvate from L-glutamate: step 1/4. With respect to regulation, competitively inhibited by (2S,4S)-4-fluoroglutamate, 2-methyleneglutarate, (2R,3RS)-3-fluoroglutamate and (S)-3-methylitaconate. Catalyzes the carbon skeleton rearrangement of L-glutamate to L-threo-3-methylaspartate ((2S,3S)-3-methylaspartate). The sequence is that of Glutamate mutase epsilon subunit from Clostridium cochlearium.